The following is a 329-amino-acid chain: Vomeronasal type-1 receptor 42 (329 aa).

Topologically, residues 1-32 (MGDILFSSPQSMFSHTMNKNSILHTHSIIGKT) are extracellular. The helical transmembrane segment at 33–53 (FFSEIGIGISGNSFLLLVHIL) threads the bilayer. Residues 54–65 (KFIRGHRPRLTD) lie on the Cytoplasmic side of the membrane. A helical membrane pass occupies residues 66–86 (LPIGLLSLIHLLMLLVAAFIA). Topologically, residues 87 to 109 (TDIFISRRGWDDIICKFLVYLYR) are extracellular. A disulfide bond links C101 and C188. The chain crosses the membrane as a helical span at residues 110 to 130 (VLRGFSLCTTSMLSILQAIIL). Topologically, residues 131-150 (SPRSSCLAKFKHISPHHISG) are cytoplasmic. A helical transmembrane segment spans residues 151 to 171 (AILFLSVLYMLIGSQLLVSII). Over 172–209 (ATPNLTMNDFIYVTQSCSILPLSYLMQSIYSTLLAIRE) the chain is Extracellular. N175 carries an N-linked (GlcNAc...) asparagine glycan. A helical membrane pass occupies residues 210 to 230 (FFLISLMVLSNWYMVALLSMH). Over 231–254 (RKQTQHLHGTNLSPKKSPEQSATQ) the chain is Cytoplasmic. A helical transmembrane segment spans residues 255–275 (TILMLISFFLLMTIYDTIVSC). The Extracellular segment spans residues 276–285 (SRTMFLNDPT). The helical transmembrane segment at 286-306 (SYSIELFIMHIYATVSPFVFM) threads the bilayer. Over 307–329 (STEKHIVNFLRSLGKRVINFNLH) the chain is Cytoplasmic.

It belongs to the G-protein coupled receptor 1 family.

Its subcellular location is the cell membrane. Functionally, putative pheromone receptor implicated in the regulation of social and reproductive behavior. This is Vomeronasal type-1 receptor 42 (Vmn1r42) from Mus musculus (Mouse).